The sequence spans 46 residues: Endochitinase 1A (46 aa).

Belongs to the glycosyl hydrolase 19 family. Chitinase class I subfamily.

It carries out the reaction Random endo-hydrolysis of N-acetyl-beta-D-glucosaminide (1-&gt;4)-beta-linkages in chitin and chitodextrins.. Its function is as follows. Defense against chitin-containing fungal and bacterial pathogens. This is Endochitinase 1A from Arachis hypogaea (Peanut).